Consider the following 341-residue polypeptide: Very-long-chain 3-oxoacyl-CoA reductase (341 aa).

A helical transmembrane segment spans residues 15-35 (VVTAFSVIGIVFTILKFTSFA). NADP(+)-binding residues include Val-61, Asp-115, Asn-142, Lys-177, Tyr-216, Lys-220, Val-249, and Ser-251. Tyr-216 (proton donor) is an active-site residue. Catalysis depends on Lys-220, which acts as the Lowers pKa of active site Tyr.

Belongs to the short-chain dehydrogenases/reductases (SDR) family.

The protein localises to the endoplasmic reticulum membrane. It carries out the reaction a very-long-chain (3R)-3-hydroxyacyl-CoA + NADP(+) = a very-long-chain 3-oxoacyl-CoA + NADPH + H(+). It functions in the pathway lipid metabolism; fatty acid biosynthesis. Functionally, component of the microsomal membrane bound fatty acid elongation system, which produces the 26-carbon very long-chain fatty acids (VLCFA) from palmitate. Catalyzes the reduction of the 3-ketoacyl-CoA intermediate that is formed in each cycle of fatty acid elongation. VLCFAs serve as precursors for ceramide and sphingolipids. This is Very-long-chain 3-oxoacyl-CoA reductase from Schizosaccharomyces pombe (strain 972 / ATCC 24843) (Fission yeast).